The primary structure comprises 458 residues: ATP synthase subunit beta (458 aa).

148–155 contributes to the ATP binding site; sequence GGAGVGKT.

This sequence belongs to the ATPase alpha/beta chains family. In terms of assembly, F-type ATPases have 2 components, CF(1) - the catalytic core - and CF(0) - the membrane proton channel. CF(1) has five subunits: alpha(3), beta(3), gamma(1), delta(1), epsilon(1). CF(0) has three main subunits: a(1), b(2) and c(9-12). The alpha and beta chains form an alternating ring which encloses part of the gamma chain. CF(1) is attached to CF(0) by a central stalk formed by the gamma and epsilon chains, while a peripheral stalk is formed by the delta and b chains.

It localises to the cell inner membrane. The enzyme catalyses ATP + H2O + 4 H(+)(in) = ADP + phosphate + 5 H(+)(out). In terms of biological role, produces ATP from ADP in the presence of a proton gradient across the membrane. The catalytic sites are hosted primarily by the beta subunits. This chain is ATP synthase subunit beta, found in Shewanella pealeana (strain ATCC 700345 / ANG-SQ1).